A 356-amino-acid chain; its full sequence is UDP-N-acetylglucosamine--N-acetylmuramyl-(pentapeptide) pyrophosphoryl-undecaprenol N-acetylglucosamine transferase (356 aa).

Residues 12 to 14 (TGG), Asn-124, Arg-163, Ser-188, Ile-242, 261 to 266 (ALTVSE), and Gln-287 contribute to the UDP-N-acetyl-alpha-D-glucosamine site.

This sequence belongs to the glycosyltransferase 28 family. MurG subfamily.

It localises to the cell inner membrane. The enzyme catalyses di-trans,octa-cis-undecaprenyl diphospho-N-acetyl-alpha-D-muramoyl-L-alanyl-D-glutamyl-meso-2,6-diaminopimeloyl-D-alanyl-D-alanine + UDP-N-acetyl-alpha-D-glucosamine = di-trans,octa-cis-undecaprenyl diphospho-[N-acetyl-alpha-D-glucosaminyl-(1-&gt;4)]-N-acetyl-alpha-D-muramoyl-L-alanyl-D-glutamyl-meso-2,6-diaminopimeloyl-D-alanyl-D-alanine + UDP + H(+). Its pathway is cell wall biogenesis; peptidoglycan biosynthesis. Its function is as follows. Cell wall formation. Catalyzes the transfer of a GlcNAc subunit on undecaprenyl-pyrophosphoryl-MurNAc-pentapeptide (lipid intermediate I) to form undecaprenyl-pyrophosphoryl-MurNAc-(pentapeptide)GlcNAc (lipid intermediate II). This chain is UDP-N-acetylglucosamine--N-acetylmuramyl-(pentapeptide) pyrophosphoryl-undecaprenol N-acetylglucosamine transferase, found in Azotobacter vinelandii (strain DJ / ATCC BAA-1303).